Here is a 324-residue protein sequence, read N- to C-terminus: Beta-ketoacyl-[acyl-carrier-protein] synthase III (324 aa).

Active-site residues include Cys114 and His246. The segment at Gln247 to Arg251 is ACP-binding. Residue Asn276 is part of the active site.

Belongs to the thiolase-like superfamily. FabH family. Homodimer.

The protein localises to the cytoplasm. It carries out the reaction malonyl-[ACP] + acetyl-CoA + H(+) = 3-oxobutanoyl-[ACP] + CO2 + CoA. It participates in lipid metabolism; fatty acid biosynthesis. Catalyzes the condensation reaction of fatty acid synthesis by the addition to an acyl acceptor of two carbons from malonyl-ACP. Catalyzes the first condensation reaction which initiates fatty acid synthesis and may therefore play a role in governing the total rate of fatty acid production. Possesses both acetoacetyl-ACP synthase and acetyl transacylase activities. Its substrate specificity determines the biosynthesis of branched-chain and/or straight-chain of fatty acids. The polypeptide is Beta-ketoacyl-[acyl-carrier-protein] synthase III (Campylobacter jejuni subsp. jejuni serotype O:2 (strain ATCC 700819 / NCTC 11168)).